A 35-amino-acid polypeptide reads, in one-letter code: Endochitinase 2 (35 aa).

Belongs to the glycosyl hydrolase 19 family. Chitinase class I subfamily.

The enzyme catalyses Random endo-hydrolysis of N-acetyl-beta-D-glucosaminide (1-&gt;4)-beta-linkages in chitin and chitodextrins.. Functionally, defense against chitin-containing fungal pathogens. This chain is Endochitinase 2, found in Capsicum chinense (Scotch bonnet).